Consider the following 498-residue polypeptide: MSTHKAALCKVQILKLFLISARCVRITRFYGVCGLSTSTPASSPKVCIVGGGPAGFYTAQHLVKTRTDVQVDIYERLPVPFGLVRFGVAPDHPEVKNVINTFTQTARHARCSFHGNVRVGKDVTVEELQEAYHAVVLSYGAEGNRTMGVPGEDLAGVYSAKDFVGWYNGLPRNRELRPDLSCETAVILGQGNVALDVARMLLSPVDILKKTDITQHALDALAESSVRRVLIVGRRGPLQVACTIKELREMVNLPGTRPEMEASEFEGIAETLKSLARPRKRLTELLLKAAIETPGEEELEKRNKAERAWGFRFLRRPLEVLPSTDLIRAAGIRLAVNRLEGDGEGVRAVATGEVEDVECGLVISSIGYKSLPIDPAVPFDGRKAIIPNTMGRVQQTAGLYCSGWVKRGPTGVIATTMNDSFDTARTLLQDIGKGTLDVSSVKPGSQGVSALLEKRGVKPVSFSDWEKIDSEETRRGETRGKPREKMLDVGEMLQVARA.

The N-terminal 37 residues, 1–37 (MSTHKAALCKVQILKLFLISARCVRITRFYGVCGLST), are a transit peptide targeting the mitochondrion. 4 residues coordinate FAD: Ala-54, Glu-75, Leu-83, and Val-119. Residues 190–193 (QGNV), 234–235 (RR), and Glu-246 each bind NADP(+). Residues Trp-404 and 411–413 (GVI) contribute to the FAD site. Gly-411 is an NADP(+) binding site. Basic and acidic residues predominate over residues 469-488 (DSEETRRGETRGKPREKMLD). The interval 469-489 (DSEETRRGETRGKPREKMLDV) is disordered.

This sequence belongs to the ferredoxin--NADP reductase type 1 family. The cofactor is FAD.

The protein resides in the mitochondrion inner membrane. The enzyme catalyses 2 reduced [adrenodoxin] + NADP(+) + H(+) = 2 oxidized [adrenodoxin] + NADPH. Its pathway is steroid metabolism; cholesterol metabolism. Functionally, serves as the first electron transfer protein in all the mitochondrial P450 systems including cholesterol side chain cleavage in all steroidogenic tissues, steroid 11-beta hydroxylation in the adrenal cortex, 25-OH-vitamin D3-24 hydroxylation in the kidney, and sterol C-27 hydroxylation in the liver. The chain is NADPH:adrenodoxin oxidoreductase, mitochondrial (fdxr) from Salvelinus fontinalis (Brook trout).